A 209-amino-acid chain; its full sequence is Phosphoheptose isomerase (209 aa).

Residues isoleucine 50 to aspartate 209 enclose the SIS domain. Asparagine 65 to glycine 67 is a binding site for substrate. Histidine 74 and glutamate 78 together coordinate Zn(2+). Residues glutamate 78, asparagine 109 to aspartate 110, serine 135 to serine 137, serine 140, and glutamine 188 contribute to the substrate site. Positions 188 and 196 each coordinate Zn(2+).

Belongs to the SIS family. GmhA subfamily. It depends on Zn(2+) as a cofactor.

The protein resides in the cytoplasm. The enzyme catalyses 2 D-sedoheptulose 7-phosphate = D-glycero-alpha-D-manno-heptose 7-phosphate + D-glycero-beta-D-manno-heptose 7-phosphate. Its pathway is carbohydrate biosynthesis; D-glycero-D-manno-heptose 7-phosphate biosynthesis; D-glycero-alpha-D-manno-heptose 7-phosphate and D-glycero-beta-D-manno-heptose 7-phosphate from sedoheptulose 7-phosphate: step 1/1. Functionally, catalyzes the isomerization of sedoheptulose 7-phosphate in D-glycero-D-manno-heptose 7-phosphate. The sequence is that of Phosphoheptose isomerase from Chlorobaculum tepidum (strain ATCC 49652 / DSM 12025 / NBRC 103806 / TLS) (Chlorobium tepidum).